A 468-amino-acid chain; its full sequence is 3-isopropylmalate dehydratase large subunit (468 aa).

Positions 349, 409, and 412 each coordinate [4Fe-4S] cluster.

This sequence belongs to the aconitase/IPM isomerase family. LeuC type 1 subfamily. In terms of assembly, heterodimer of LeuC and LeuD. Requires [4Fe-4S] cluster as cofactor.

The enzyme catalyses (2R,3S)-3-isopropylmalate = (2S)-2-isopropylmalate. It functions in the pathway amino-acid biosynthesis; L-leucine biosynthesis; L-leucine from 3-methyl-2-oxobutanoate: step 2/4. In terms of biological role, catalyzes the isomerization between 2-isopropylmalate and 3-isopropylmalate, via the formation of 2-isopropylmaleate. In Ruegeria pomeroyi (strain ATCC 700808 / DSM 15171 / DSS-3) (Silicibacter pomeroyi), this protein is 3-isopropylmalate dehydratase large subunit.